The following is a 79-amino-acid chain: uncharacterized protein (79 aa).

The N-terminal stretch at 1–20 (MSQLMGIITRLQSLQETAEA) is a signal peptide.

This is an uncharacterized protein from Bacillus subtilis (strain 168).